We begin with the raw amino-acid sequence, 67 residues long: Brevinin-1CDYa (67 aa).

A signal peptide spans 1-22 (MFTLKKSLLLIFFLGTINLSLC). The propeptide occupies 23-45 (EEERNADEEERRDDLEERDVEVE). Cysteine 61 and cysteine 67 are joined by a disulfide.

The protein belongs to the frog skin active peptide (FSAP) family. Brevinin subfamily. In terms of tissue distribution, expressed by the skin glands.

It is found in the secreted. Its function is as follows. Antimicrobial peptide. Has low activity against the Gram-positive bacterium S.aureus (MIC=12.5 uM) and the Gram-negative bacterium E.coli (MIC=25 uM). Has weak hemolytic activity against human erythrocytes. The chain is Brevinin-1CDYa from Rana dybowskii (Dybovsky's frog).